The following is a 553-amino-acid chain: MTVQTFYLIGEKERSTRELDVGDPKTVNALRQGLAEVFNILSAEGIDFHDCHGPISTIESILRSESVGITVNGHPVRYPQQPQGIPIFGNHFEIYPDHLGNHERLFNKYGSVIRTNNMGRVTYLTNDPDIAALAFRDNDYFTKAPSSASHPLYGIRDQTALFLCDTESPAWKEAHKFIPPSMTPRAVRHYTPLLQQSVDTVFNVLDKFDNNGQAFNVYHLTAKLASQVICQLVLGVDLHHFDAVDSPVHPIIVLLQRYLTLNRRVQTKGAWYSYLPFGDPVALKNTRRELYGLIEEAVITCQKKNGGTTGDLPIQTAALHATCLVDYLARATDEHGNKLRHEYILSNTLALVGAGFVTSSAFLSWLIYSLVEYPGQQDRLLQELVDHGAVSDKRWTYDEIQALPFLDAFVKEAQRMHSPSFQPARNVKKDIILPGGWALPQGSILIPSIPHLHHHTAYWENPDRFDPDRWRTEKVKNRHRSVYVPFAAGPRSCIGFNVALQEVKISLAELVYRYEFVNATNEGIEYDPDFIVIRPVNFYVRAIRRTEWPARSP.

Residues 351–371 (LVGAGFVTSSAFLSWLIYSLV) traverse the membrane as a helical segment. Cys493 is a heme binding site. Asn518 carries N-linked (GlcNAc...) asparagine glycosylation.

This sequence belongs to the cytochrome P450 family. It depends on heme as a cofactor.

It is found in the membrane. Its pathway is polyketide biosynthesis. Functionally, cytochrome P450 monooxygenase; part of the gene cluster that mediates the biosynthesis of asperlin, a polyketide showing anti-inflammatory, antitumor and antibiotic activities. The first step of the asperlin biosynthesis is the production of the intermediate 2,4,6-octatrienoic acid by the highly redusing polyketide synthase alnA with cleavage of the PKS product by the esterase alnB. 2,4,6-octatrienoic acid is further converted to asperlin via several steps involving the remaining enzymes from the cluster. The polypeptide is Cytochrome P450 monooxygenase alnD (Emericella nidulans (strain FGSC A4 / ATCC 38163 / CBS 112.46 / NRRL 194 / M139) (Aspergillus nidulans)).